The chain runs to 512 residues: Cytochrome P450 monooxygenase astB (512 aa).

A helical membrane pass occupies residues 5–25 (DLSFPAAIGAVFGAVAISVAA). Heme is bound at residue cysteine 452.

The protein belongs to the cytochrome P450 family. It depends on heme as a cofactor.

The protein resides in the membrane. Its pathway is secondary metabolite biosynthesis; terpenoid biosynthesis. Functionally, cytochrome P450 monooxygenase; part of the gene cluster that mediates the biosynthesis of the sesquiterpenoid aspterric acid (AA), an inhibitor of dihydroxy-acid dehydratase (DHAD) effective as an herbicide. AstB catalyzes the second step within the pathway and converts (-)-daucane produced by the terpene cyclase astA into an alpha-epoxy carboxylate intermediate which is further converted into the tricyclic aspterric acid by the cytochrome P450 monooxygenase astC. This chain is Cytochrome P450 monooxygenase astB, found in Aspergillus terreus (strain NIH 2624 / FGSC A1156).